The following is a 152-amino-acid chain: FAD synthase (152 aa).

Residues 9–10, 14–17, and Asp-92 each bind ATP; these read TF and HPGH.

Belongs to the archaeal FAD synthase family. As to quaternary structure, homodimer. The cofactor is a divalent metal cation.

The enzyme catalyses FMN + ATP + H(+) = FAD + diphosphate. Its pathway is cofactor biosynthesis; FAD biosynthesis; FAD from FMN: step 1/1. Functionally, catalyzes the transfer of the AMP portion of ATP to flavin mononucleotide (FMN) to produce flavin adenine dinucleotide (FAD) coenzyme. In Ferroglobus placidus (strain DSM 10642 / AEDII12DO), this protein is FAD synthase.